The chain runs to 105 residues: NADH-quinone oxidoreductase subunit K (105 aa).

The next 3 membrane-spanning stretches (helical) occupy residues 8-28 (LAAYLILGAMLFSIGVVGVFL), 34-54 (IILLMAIELLLLAVNINLVAF), and 65-85 (VFVFFILTVAAAEAAIGLAIL).

It belongs to the complex I subunit 4L family. NDH-1 is composed of 14 different subunits. Subunits NuoA, H, J, K, L, M, N constitute the membrane sector of the complex.

Its subcellular location is the cell inner membrane. The catalysed reaction is a quinone + NADH + 5 H(+)(in) = a quinol + NAD(+) + 4 H(+)(out). NDH-1 shuttles electrons from NADH, via FMN and iron-sulfur (Fe-S) centers, to quinones in the respiratory chain. The immediate electron acceptor for the enzyme in this species is believed to be ubiquinone. Couples the redox reaction to proton translocation (for every two electrons transferred, four hydrogen ions are translocated across the cytoplasmic membrane), and thus conserves the redox energy in a proton gradient. In Acidithiobacillus ferrooxidans (strain ATCC 23270 / DSM 14882 / CIP 104768 / NCIMB 8455) (Ferrobacillus ferrooxidans (strain ATCC 23270)), this protein is NADH-quinone oxidoreductase subunit K.